A 206-amino-acid chain; its full sequence is Large ribosomal subunit protein uL4 (206 aa).

Residues 63–93 form a disordered region; that stretch reads MYKQKGTGRARHHSARAPQFRGGGKAHGPVV. Over residues 64-77 the composition is skewed to basic residues; sequence YKQKGTGRARHHSA.

Belongs to the universal ribosomal protein uL4 family. As to quaternary structure, part of the 50S ribosomal subunit.

In terms of biological role, one of the primary rRNA binding proteins, this protein initially binds near the 5'-end of the 23S rRNA. It is important during the early stages of 50S assembly. It makes multiple contacts with different domains of the 23S rRNA in the assembled 50S subunit and ribosome. Its function is as follows. Forms part of the polypeptide exit tunnel. The polypeptide is Large ribosomal subunit protein uL4 (Rhizobium meliloti (strain 1021) (Ensifer meliloti)).